Consider the following 59-residue polypeptide: uncharacterized protein (59 aa).

The helical transmembrane segment at 7–27 threads the bilayer; sequence LLLLVAIALISAFALTVTGVV.

It localises to the membrane. This is an uncharacterized protein from Pyrobaculum aerophilum (strain ATCC 51768 / DSM 7523 / JCM 9630 / CIP 104966 / NBRC 100827 / IM2).